We begin with the raw amino-acid sequence, 673 residues long: uncharacterized protein (673 aa).

A disordered region spans residues 1-95 (MLNGEKSALG…QSSAIADSIG (95 aa)). Positions 13–40 (PSNSNSSSKLNAKSPNFIPSSSNIPRSS) are enriched in low complexity. The span at 42 to 60 (KTKEHSADRKPHRNSEKKT) shows a compositional bias: basic and acidic residues. The segment at 214–273 (CPFCLEEKPVAARMSRCGHVYCFSCLLRFVETPTAAEVKAAETSGTKIVKCGHRSCPICW) adopts an RING-type zinc-finger fold. A disordered region spans residues 649–673 (SAPSKNSKNKKKKKLVLLSTGAAHR).

It is found in the cytoplasm. The protein localises to the nucleus. This is an uncharacterized protein from Schizosaccharomyces pombe (strain 972 / ATCC 24843) (Fission yeast).